The primary structure comprises 195 residues: N-(5'-phosphoribosyl)anthranilate isomerase (195 aa).

Belongs to the TrpF family.

The catalysed reaction is N-(5-phospho-beta-D-ribosyl)anthranilate = 1-(2-carboxyphenylamino)-1-deoxy-D-ribulose 5-phosphate. The protein operates within amino-acid biosynthesis; L-tryptophan biosynthesis; L-tryptophan from chorismate: step 3/5. This chain is N-(5'-phosphoribosyl)anthranilate isomerase, found in Methanoregula boonei (strain DSM 21154 / JCM 14090 / 6A8).